Consider the following 284-residue polypeptide: Tropomyosin (284 aa).

Positions 1–284 (MDAIKKKMQA…DMTFTELIGN (284 aa)) form a coiled coil.

It belongs to the tropomyosin family. In terms of assembly, homodimer.

Functionally, tropomyosin, in association with the troponin complex, plays a central role in the calcium dependent regulation of muscle contraction. In Periplaneta fuliginosa (Smokybrown cockroach), this protein is Tropomyosin.